The following is a 364-amino-acid chain: L-carnitine dehydrogenase (364 aa).

Residue 11–16 (GGGVIG) participates in NAD(+) binding. Residues 336–364 (KPAASTAAEKAKASKPVKKAEKPKKKKKG) are disordered. A compositionally biased stretch (basic residues) spans 348–364 (ASKPVKKAEKPKKKKKG).

The protein belongs to the 3-hydroxyacyl-CoA dehydrogenase family. L-carnitine dehydrogenase subfamily. As to quaternary structure, homodimer.

The protein localises to the cytoplasm. The enzyme catalyses carnitine + NAD(+) = 3-dehydrocarnitine + NADH + H(+). The protein operates within amine and polyamine metabolism; carnitine metabolism. In terms of biological role, catalyzes the NAD(+)-dependent oxidation of L-carnitine to 3-dehydrocarnitine. The polypeptide is L-carnitine dehydrogenase (Mesorhizobium japonicum (strain LMG 29417 / CECT 9101 / MAFF 303099) (Mesorhizobium loti (strain MAFF 303099))).